The primary structure comprises 325 residues: Elongation factor P--(R)-beta-lysine ligase (325 aa).

76 to 78 (SPE) contacts substrate. ATP is bound by residues 100–102 (RNE) and N109. Y118 contributes to the substrate binding site. 244 to 245 (EL) provides a ligand contact to ATP. E251 contacts substrate. G300 lines the ATP pocket.

Belongs to the class-II aminoacyl-tRNA synthetase family. EpmA subfamily. In terms of assembly, homodimer.

It carries out the reaction D-beta-lysine + L-lysyl-[protein] + ATP = N(6)-((3R)-3,6-diaminohexanoyl)-L-lysyl-[protein] + AMP + diphosphate + H(+). Functionally, with EpmB is involved in the beta-lysylation step of the post-translational modification of translation elongation factor P (EF-P). Catalyzes the ATP-dependent activation of (R)-beta-lysine produced by EpmB, forming a lysyl-adenylate, from which the beta-lysyl moiety is then transferred to the epsilon-amino group of a conserved specific lysine residue in EF-P. The sequence is that of Elongation factor P--(R)-beta-lysine ligase from Pectobacterium carotovorum subsp. carotovorum (strain PC1).